We begin with the raw amino-acid sequence, 820 residues long: Trimethylamine-N-oxide reductase (820 aa).

The tat-type signal signal peptide spans 1 to 33 (MAITRRSFLKGVATTSAASVIGPSLLASASANA). Ser179 is a binding site for Mo-bis(molybdopterin guanine dinucleotide).

This sequence belongs to the prokaryotic molybdopterin-containing oxidoreductase family. Mo-bis(molybdopterin guanine dinucleotide) serves as cofactor. Predicted to be exported by the Tat system. The position of the signal peptide cleavage has not been experimentally proven.

Its subcellular location is the periplasm. It carries out the reaction trimethylamine + 2 Fe(III)-[cytochrome c] + H2O = trimethylamine N-oxide + 2 Fe(II)-[cytochrome c] + 3 H(+). Functionally, reduces trimethylamine-N-oxide (TMAO) into trimethylamine; an anaerobic reaction coupled to energy-yielding reactions. This Vibrio vulnificus (strain YJ016) protein is Trimethylamine-N-oxide reductase (torA).